Here is a 161-residue protein sequence, read N- to C-terminus: MDYYQWRKKNRRRKRNLQTKKPLNYALKLLKYRVRFEDELRERLKKQGFADEEVESTINTLKKQGYLDDEKAAYLFALDEMRLKLFGPRVVRMKLKSLGVDEEIIERAIEKALEEIDFHEELKRLKGRFKDRWELRDYLYRRGFDPSLIEEILNKIDGGEE.

It belongs to the RecX family.

Its subcellular location is the cytoplasm. Functionally, modulates RecA activity. This chain is Regulatory protein RecX, found in Thermotoga petrophila (strain ATCC BAA-488 / DSM 13995 / JCM 10881 / RKU-1).